We begin with the raw amino-acid sequence, 289 residues long: MPSAPTELRDCPAPAKLNLFLHVVGRRPDGYHLLQTVFQLIDWCDTLHFGRRADGRLVRTTDIPGVPADEDLVIRAARLLQAETGCAYGADIALEKRLPMGGGIGGGSSDAATALLALNRLWGLDLPRAKLMSLGLRLGADVPFFLFGQNAFAEGIGEALTPIALPPATFVVIHPRVHVPTPEIFSDEGLTRNTPLTIITDFPDQQIVFAYGRNDLQAVAERKYGEIARALAWLRQFSPLARMTGSGACVFAPFDRAEQAQAVADQVPSEWEGRCAAGLTHHPLAMFAV.

Residue lysine 16 is part of the active site. 99-109 (PMGGGIGGGSS) is an ATP binding site. Aspartate 141 is a catalytic residue.

Belongs to the GHMP kinase family. IspE subfamily.

The enzyme catalyses 4-CDP-2-C-methyl-D-erythritol + ATP = 4-CDP-2-C-methyl-D-erythritol 2-phosphate + ADP + H(+). It participates in isoprenoid biosynthesis; isopentenyl diphosphate biosynthesis via DXP pathway; isopentenyl diphosphate from 1-deoxy-D-xylulose 5-phosphate: step 3/6. In terms of biological role, catalyzes the phosphorylation of the position 2 hydroxy group of 4-diphosphocytidyl-2C-methyl-D-erythritol. The polypeptide is 4-diphosphocytidyl-2-C-methyl-D-erythritol kinase (Ralstonia nicotianae (strain ATCC BAA-1114 / GMI1000) (Ralstonia solanacearum)).